The following is a 66-amino-acid chain: MPKLKTKSGAKKRFKITATGLLKAGVAGKRHRLIGHNGKYIRQNRGTKVMSASDTKTIRSYMPYGL.

The protein belongs to the bacterial ribosomal protein bL35 family.

The chain is Large ribosomal subunit protein bL35 from Caulobacter sp. (strain K31).